A 320-amino-acid polypeptide reads, in one-letter code: Cytochrome f (320 aa).

Residues Met1–Ala35 form the signal peptide. Positions 36, 56, 59, and 60 each coordinate heme. The helical transmembrane segment at Val286 to Lys306 threads the bilayer.

Belongs to the cytochrome f family. In terms of assembly, the 4 large subunits of the cytochrome b6-f complex are cytochrome b6, subunit IV (17 kDa polypeptide, petD), cytochrome f and the Rieske protein, while the 4 small subunits are PetG, PetL, PetM and PetN. The complex functions as a dimer. Heme serves as cofactor.

It is found in the plastid. It localises to the chloroplast thylakoid membrane. Component of the cytochrome b6-f complex, which mediates electron transfer between photosystem II (PSII) and photosystem I (PSI), cyclic electron flow around PSI, and state transitions. In Chloranthus spicatus (Chulantree), this protein is Cytochrome f.